A 992-amino-acid chain; its full sequence is Disks large-associated protein 1 (992 aa).

Disordered regions lie at residues 154 to 209 (SLEG…SWWS) and 355 to 375 (KAMGDEDSGDSDTSPKPSPKV). Phosphoserine is present on Ser169. Residues 195-209 (SNASNASPTSPSWWS) are compositionally biased toward low complexity. Ser362, Ser365, Ser368, Ser372, Ser389, Ser418, Ser421, Ser425, Ser428, Ser437, Ser509, Ser516, and Ser578 each carry phosphoserine. Thr579 is modified (phosphothreonine). Phosphoserine occurs at positions 581 and 605. Thr606 bears the Phosphothreonine mark. 2 positions are modified to phosphoserine: Ser608 and Ser611. Interaction with DYL2 regions lie at residues 665 to 676 (LSIGIQVDDAEE) and 687 to 698 (SKFQSVGVQVEE). The segment at 914 to 980 (WKQMDPLDKK…QNSATESAES (67 aa)) is disordered. Composition is skewed to basic and acidic residues over residues 918–927 (DPLDKKERRA) and 943–958 (IRERSLESSQRQEARK). Ser947 is subject to Phosphoserine. A compositionally biased stretch (polar residues) spans 969–978 (VRQNSATESA). The PDZ-binding motif lies at 990–992 (TRL).

The protein belongs to the SAPAP family. As to quaternary structure, interacts with guanylate kinase-like domain of DLG1, DLG2, DLG3, DLG4 and AIP1. Interacts with the PDZ domain of SHANK1, SHANK2 and SHANK3. Found in a complex with DLG4 and SHANK1, SHANK2 or SHANK3. Found in a complex with DLG4 and BEGAIN. Interacts with DYL2 and LRFN1. Interacts with MPP2 (via the SH3-Guanylate kinase-like sub-module). Ubiquitinated by TRIM3; leading to proteasomal degradation. As to expression, expressed in brain and testis.

It localises to the cell membrane. Its subcellular location is the postsynaptic density. It is found in the synapse. Its function is as follows. Part of the postsynaptic scaffold in neuronal cells. This Rattus norvegicus (Rat) protein is Disks large-associated protein 1.